The chain runs to 374 residues: Putative clathrin assembly protein At1g33340 (374 aa).

Residues 30–163 (YNEKAFFDIE…GWIINQAGKL (134 aa)) enclose the ENTH domain.

The protein localises to the membrane. It localises to the clathrin-coated pit. It is found in the golgi apparatus. Its subcellular location is the cytoplasmic vesicle. The protein resides in the clathrin-coated vesicle. This is Putative clathrin assembly protein At1g33340 from Arabidopsis thaliana (Mouse-ear cress).